A 70-amino-acid polypeptide reads, in one-letter code: Peptide BmKn2 (70 aa).

A signal peptide spans 1–23; the sequence is MKSQTFFLLFLVVLLLAISQSEA. Phe-36 is modified (phenylalanine amide). The propeptide occupies 40–70; sequence SMRDMDTMKYLYDPSLSAADLKTLQKLMENY.

Belongs to the non-disulfide-bridged peptide (NDBP) superfamily. Short antimicrobial peptide (group 4) family. Expressed by the venom gland.

The protein localises to the secreted. Its subcellular location is the target cell membrane. Its function is as follows. Antimicrobial peptide with potent activity against bacteria. Has strong antibacterial activity against Gram-positive bacteria S.aureus, M.luteus, B.subtilis, and Gram-negative bacteria E.coli, P.aeruginosa and N.gonorrhoeae. Also shows low activity against HIV-1 PV. The protein is Peptide BmKn2 of Olivierus martensii (Manchurian scorpion).